Reading from the N-terminus, the 83-residue chain is Large ribosomal subunit protein eL31 (83 aa).

The protein belongs to the eukaryotic ribosomal protein eL31 family.

This chain is Large ribosomal subunit protein eL31, found in Methanococcus maripaludis (strain DSM 14266 / JCM 13030 / NBRC 101832 / S2 / LL).